The sequence spans 372 residues: Glutamate 5-kinase (372 aa).

Lysine 14 is an ATP binding site. Substrate-binding residues include serine 54, aspartate 141, and asparagine 153. ATP is bound at residue 173 to 174 (TD). The PUA domain maps to 280-358 (RGHVVIDAGA…GEIESVLGYM (79 aa)).

It belongs to the glutamate 5-kinase family.

The protein localises to the cytoplasm. The enzyme catalyses L-glutamate + ATP = L-glutamyl 5-phosphate + ADP. It participates in amino-acid biosynthesis; L-proline biosynthesis; L-glutamate 5-semialdehyde from L-glutamate: step 1/2. In terms of biological role, catalyzes the transfer of a phosphate group to glutamate to form L-glutamate 5-phosphate. This is Glutamate 5-kinase from Burkholderia lata (strain ATCC 17760 / DSM 23089 / LMG 22485 / NCIMB 9086 / R18194 / 383).